The primary structure comprises 248 residues: MKEPSKNRIVAMIPARYKASRFPGKLMKDLNGKTVIARTYEAAVNTELFDEVYVVTDSNKIFDEIVNEGGQVIRSKKEHECGSDRIAEAVENMDVDIVVNVQGDEPFIDKNSLAKLLKVFEQEGAEEIDLTSLKTPLKDSDDITNPNNVKVITGKDDFALYFSRFPIPYRRDTSANVTYYKHIGIYAFRKSALMDFYRLPMLHLEAAEKIECIRYLEYGKKIKMVETSVKSVGIDTPEDLEKARKLLS.

Belongs to the KdsB family.

The protein resides in the cytoplasm. The catalysed reaction is 3-deoxy-alpha-D-manno-oct-2-ulosonate + CTP = CMP-3-deoxy-beta-D-manno-octulosonate + diphosphate. The protein operates within nucleotide-sugar biosynthesis; CMP-3-deoxy-D-manno-octulosonate biosynthesis; CMP-3-deoxy-D-manno-octulosonate from 3-deoxy-D-manno-octulosonate and CTP: step 1/1. It participates in bacterial outer membrane biogenesis; lipopolysaccharide biosynthesis. Its function is as follows. Activates KDO (a required 8-carbon sugar) for incorporation into bacterial lipopolysaccharide in Gram-negative bacteria. The sequence is that of 3-deoxy-manno-octulosonate cytidylyltransferase from Christiangramia forsetii (strain DSM 17595 / CGMCC 1.15422 / KT0803) (Gramella forsetii).